Reading from the N-terminus, the 351-residue chain is MTVDRLTSRSRAAGUAAKIAPGDLERILATLPRDPREGERVVVGTRDNEDAAIVRVPGGKAIVQTLDFFTPIVDDPYLFGQIAAANALSDVYAMGGEPWCALNIVCFPVKELPEDILADILRGGADKVREAGAVLVGGHSIEDESIKYGLSVTGIIDPDCYATNTGLRPGDVLLLTKPLGSGVLATAVKAGWDGFEAHEQELGRWGAMLNRAGGRVIRELGLAAATDVTGFGLGGHLLEMANASNMSVHVDVSTLPLMPAVLDLVATGLLPAGSHANRHFCSGNVSVHPEVDSLLVDIVFDAQTSGGLILAVPPHLVDDACSILRAEDAPFWRIGHVEEMGEGVPRLVLQP.

Sec-15 is a catalytic residue. Residue Sec-15 is a non-standard amino acid, selenocysteine. Residues Lys-18 and 47–49 (DNE) each bind ATP. Asp-50 provides a ligand contact to Mg(2+). ATP-binding positions include Asp-67, Asp-90, and 138-140 (GHS). Residue Asp-90 coordinates Mg(2+). A Mg(2+)-binding site is contributed by Asp-227.

The protein belongs to the selenophosphate synthase 1 family. Class I subfamily. As to quaternary structure, homodimer. The cofactor is Mg(2+).

The catalysed reaction is hydrogenselenide + ATP + H2O = selenophosphate + AMP + phosphate + 2 H(+). In terms of biological role, synthesizes selenophosphate from selenide and ATP. This Nitratidesulfovibrio vulgaris (strain ATCC 29579 / DSM 644 / CCUG 34227 / NCIMB 8303 / VKM B-1760 / Hildenborough) (Desulfovibrio vulgaris) protein is Selenide, water dikinase.